The following is a 141-amino-acid chain: Hemoglobin subunit alpha-D (141 aa).

Residues 1-141 (MLTAEDKKLI…VAAVLAEKYR (141 aa)) enclose the Globin domain. Residues histidine 58 and histidine 87 each contribute to the heme b site.

It belongs to the globin family. Heterotetramer of two alpha-D chains and two beta chains. Red blood cells.

Functionally, involved in oxygen transport from the lung to the various peripheral tissues. The protein is Hemoglobin subunit alpha-D (HBAD) of Anas platyrhynchos (Mallard).